Reading from the N-terminus, the 359-residue chain is Olfactory receptor 8S1 (359 aa).

Over 1–25 the chain is Extracellular; the sequence is MALGNHSTITEFLLLGLSADPNIRA. Residue Asn5 is glycosylated (N-linked (GlcNAc...) asparagine). Residues 26–46 traverse the membrane as a helical segment; it reads LLFVLFLGIYLLTIMENLMLL. The Cytoplasmic portion of the chain corresponds to 47–54; sequence LMIRADSC. The chain crosses the membrane as a helical span at residues 55–75; that stretch reads LHKPMYFFLSHLSFVDLCFSS. The Extracellular segment spans residues 76 to 99; sequence VIVPKMLENLLSQRKTISVEGCLA. Cysteines 97 and 189 form a disulfide. Residues 100–120 form a helical membrane-spanning segment; sequence QVFFVFVTAGTEACLLSGMAY. Residues 121–139 are Cytoplasmic-facing; the sequence is DRHAAICRPLLYGQIMGKQ. A helical membrane pass occupies residues 140-160; that stretch reads LYMHLVWGSWGLGFLDALINV. The Extracellular portion of the chain corresponds to 161-197; that stretch reads LLAVNMVFCEAKIIHHYSYEMPSLLPLSCSDISRSLI. A helical transmembrane segment spans residues 198-217; that stretch reads ALLCSTLLHGLGNFLLVFLS. Topologically, residues 218 to 237 are cytoplasmic; sequence YTRIISTILSISSTSGRSKA. The chain crosses the membrane as a helical span at residues 238–258; it reads FSTCSAHLTAVTLYYGSGLLR. Topologically, residues 259 to 269 are extracellular; that stretch reads HLMPNSGSPIE. The chain crosses the membrane as a helical span at residues 270–290; the sequence is LIFSVQYTVVTPMLNSLIYSL. Topologically, residues 291 to 359 are cytoplasmic; the sequence is KNKEVKGERS…ALRAAPTALP (69 aa). Positions 301-338 are disordered; that stretch reads LRDSSHLPQLHKGQARWKRPAFTEGRREPGHPELSIPV.

It belongs to the G-protein coupled receptor 1 family.

Its subcellular location is the cell membrane. Its function is as follows. Odorant receptor. In Homo sapiens (Human), this protein is Olfactory receptor 8S1 (OR8S1).